A 230-amino-acid chain; its full sequence is MKILWLIILVNLFLSCGNESKEKSNLGLRLRELEISGGGSESKIEVYKEFIEKEDKNILKIVNSIDKKARFFNLIGLEFFKLGQYGPAIEYFAKNLEINPNNYLSHFYIGVASYNLAKNLRVKDEVEKYIILAENSFLKSLSIRDDFKDSLFAISNMYVYDLDKQLEAKNYLNKLGDMGEDYFEFLMLRGANYYSLGDLGNAILFYDKASKKASTEEQKEGVSRIMSNLK.

TPR repeat units follow at residues 69-102 (ARFFNLIGLEFFKLGQYGPAIEYFAKNLEINPNN) and 183-216 (FEFLMLRGANYYSLGDLGNAILFYDKASKKASTE).

This chain is TPR repeat-containing protein BB_0298, found in Borreliella burgdorferi (strain ATCC 35210 / DSM 4680 / CIP 102532 / B31) (Borrelia burgdorferi).